A 254-amino-acid polypeptide reads, in one-letter code: MSGETTRLTEPQLRELAARGAAELDGATATDMLRWTDETFGDIGGAGGGVSGHRGWTTCNYVVASNMADAVLVDLAAKVRPGVPVIFLDTGYHFVETIGTRDAIESVYDVRVLNVTPEHTVAEQDELLGKDLFARNPHECCRLRKVVPLGKTLRGYSAWVTGLRRVDAPTRANAPLVSFDETFKLVKVNPLAAWTDQDVQEYIADNDVLVNPLVREGYPSIGCAPCTAKPAEGADPRSGRWQGLAKTECGLHAS.

Positions 140, 141, 223, and 226 each coordinate [4Fe-4S] cluster. Cys-249 functions as the Nucleophile; cysteine thiosulfonate intermediate in the catalytic mechanism.

This sequence belongs to the PAPS reductase family. CysH subfamily. The cofactor is [4Fe-4S] cluster.

It is found in the cytoplasm. The enzyme catalyses [thioredoxin]-disulfide + sulfite + AMP + 2 H(+) = adenosine 5'-phosphosulfate + [thioredoxin]-dithiol. It functions in the pathway sulfur metabolism; hydrogen sulfide biosynthesis; sulfite from sulfate. Catalyzes the formation of sulfite from adenosine 5'-phosphosulfate (APS) using thioredoxin as an electron donor. The polypeptide is Adenosine 5'-phosphosulfate reductase (Mycobacterium bovis (strain ATCC BAA-935 / AF2122/97)).